The sequence spans 359 residues: RNA 3'-terminal phosphate cyclase (359 aa).

Residues Gln-100 and 291–294 (HASD) contribute to the ATP site. His-317 serves as the catalytic Tele-AMP-histidine intermediate.

This sequence belongs to the RNA 3'-terminal cyclase family. Type 1 subfamily.

It is found in the cytoplasm. It carries out the reaction a 3'-end 3'-phospho-ribonucleotide-RNA + ATP = a 3'-end 2',3'-cyclophospho-ribonucleotide-RNA + AMP + diphosphate. Catalyzes the conversion of 3'-phosphate to a 2',3'-cyclic phosphodiester at the end of RNA. The mechanism of action of the enzyme occurs in 3 steps: (A) adenylation of the enzyme by ATP; (B) transfer of adenylate to an RNA-N3'P to produce RNA-N3'PP5'A; (C) and attack of the adjacent 2'-hydroxyl on the 3'-phosphorus in the diester linkage to produce the cyclic end product. The biological role of this enzyme is unknown but it is likely to function in some aspects of cellular RNA processing. The protein is RNA 3'-terminal phosphate cyclase of Hyperthermus butylicus (strain DSM 5456 / JCM 9403 / PLM1-5).